Here is a 368-residue protein sequence, read N- to C-terminus: High affinity iron permease 1 (368 aa).

A run of 7 helical transmembrane segments spans residues 8–28 (VPIFFILFRETTEAAIIISVL), 50–70 (VWIGGAAGLFICLCIGAAFIA), 86–106 (IWEGVFSLVAVIMITAMGLAM), 142–162 (AFFVLPFITVLREGLEAVVFI), 173–193 (SIPIAAIMGIICGCLVGFLIY), 204–224 (FFVFSTVVLYLVAAGLMAKGV), and 287–307 (SIISYCLYWLFVCCYLVFSYF). The interval 346 to 368 (DKESDEEANNHPKEKIESDAIKA) is disordered. The segment covering 353-368 (ANNHPKEKIESDAIKA) has biased composition (basic and acidic residues).

Belongs to the oxidase-dependent Fe transporter (OFeT) (TC 9.A.10.1) family.

It is found in the cell membrane. Its function is as follows. High affinity iron permease required for iron uptake in iron-depleted environments. Required for full virulence in mice. In Rhizopus delemar (strain RA 99-880 / ATCC MYA-4621 / FGSC 9543 / NRRL 43880) (Mucormycosis agent), this protein is High affinity iron permease 1.